The sequence spans 351 residues: 4-hydroxy-3-methylbut-2-enyl diphosphate reductase (351 aa).

Residue C18 participates in [4Fe-4S] cluster binding. H47 and H83 together coordinate (2E)-4-hydroxy-3-methylbut-2-enyl diphosphate. 2 residues coordinate dimethylallyl diphosphate: H47 and H83. Isopentenyl diphosphate contacts are provided by H47 and H83. Position 105 (C105) interacts with [4Fe-4S] cluster. H133 is a binding site for (2E)-4-hydroxy-3-methylbut-2-enyl diphosphate. A dimethylallyl diphosphate-binding site is contributed by H133. H133 lines the isopentenyl diphosphate pocket. The active-site Proton donor is the E135. Residue T174 coordinates (2E)-4-hydroxy-3-methylbut-2-enyl diphosphate. A [4Fe-4S] cluster-binding site is contributed by C204. The (2E)-4-hydroxy-3-methylbut-2-enyl diphosphate site is built by S232, S233, N234, and S277. Dimethylallyl diphosphate contacts are provided by S232, S233, N234, and S277. Isopentenyl diphosphate contacts are provided by S232, S233, N234, and S277.

Belongs to the IspH family. Requires [4Fe-4S] cluster as cofactor.

It catalyses the reaction isopentenyl diphosphate + 2 oxidized [2Fe-2S]-[ferredoxin] + H2O = (2E)-4-hydroxy-3-methylbut-2-enyl diphosphate + 2 reduced [2Fe-2S]-[ferredoxin] + 2 H(+). The enzyme catalyses dimethylallyl diphosphate + 2 oxidized [2Fe-2S]-[ferredoxin] + H2O = (2E)-4-hydroxy-3-methylbut-2-enyl diphosphate + 2 reduced [2Fe-2S]-[ferredoxin] + 2 H(+). The protein operates within isoprenoid biosynthesis; dimethylallyl diphosphate biosynthesis; dimethylallyl diphosphate from (2E)-4-hydroxy-3-methylbutenyl diphosphate: step 1/1. It participates in isoprenoid biosynthesis; isopentenyl diphosphate biosynthesis via DXP pathway; isopentenyl diphosphate from 1-deoxy-D-xylulose 5-phosphate: step 6/6. Its function is as follows. Catalyzes the conversion of 1-hydroxy-2-methyl-2-(E)-butenyl 4-diphosphate (HMBPP) into a mixture of isopentenyl diphosphate (IPP) and dimethylallyl diphosphate (DMAPP). Acts in the terminal step of the DOXP/MEP pathway for isoprenoid precursor biosynthesis. The chain is 4-hydroxy-3-methylbut-2-enyl diphosphate reductase from Bartonella tribocorum (strain CIP 105476 / IBS 506).